Consider the following 160-residue polypeptide: MSSRRDAREQVMKTLYANEQTDGDAEQALHALVRVPLDEDPSTRDFAEHLFRETLKTMEEADEIIEKHADNWEIHRIAAIDRSLLRMATTELLKFEEVPPKVSVDEAIEIAKRYSTPRSGTFVNGVIDAILLDLHDQGRLNKTGRGLIGMDTIQERAGSS.

Belongs to the NusB family.

In terms of biological role, involved in transcription antitermination. Required for transcription of ribosomal RNA (rRNA) genes. Binds specifically to the boxA antiterminator sequence of the ribosomal RNA (rrn) operons. The polypeptide is Transcription antitermination protein NusB (Salinibacter ruber (strain DSM 13855 / M31)).